The primary structure comprises 259 residues: DNA terminal protein (259 aa).

Tyrosine 190 carries the O-(5'-phospho-DNA)-tyrosine modification. Residues 243–259 (KKKYKRRQKRGYGSKGV) carry the Nuclear localization signal motif.

Belongs to the tectivirus DNA terminal protein family. Heterodimer with viral polymerase. Binds to ssDNA.

It is found in the virion. The protein resides in the host nucleus. Functionally, acts as a primer for viral genomic replication. DNA terminal protein is covalently linked to the 5'-ends of both strands of the genome through a phosphodiester bond between the beta-hydroxyl group of a tyrosine residue and the 5'-phosphate of the terminal deoxyadenylate. This protein is essential for DNA replication and is involved in the priming of DNA elongation. This Enterobacteria phage PRD1 (Bacteriophage PRD1) protein is DNA terminal protein (VIII).